The sequence spans 63 residues: Large ribosomal subunit protein bL28c (63 aa).

This sequence belongs to the bacterial ribosomal protein bL28 family.

It is found in the plastid. Its subcellular location is the chloroplast. This is Large ribosomal subunit protein bL28c from Pyropia yezoensis (Susabi-nori).